The sequence spans 472 residues: MLKSYQAGVREYRETYWDPHYTPKDSDILAVFKVIPQAGVPREEAAAAVCAESSTATWTTVWTDLLTDLDYYKGRAYAIEDVPGDDEAFYAFVAYPMGLFEEGSIVNVFTSLVGNVFGFKAVRALRLEDVRFPLWFVTTCDGPPHGIQVERDKLDKYGRPMLGCTIKPKLGLSAKNYGRAVYECLRGGLDFTKDDENVNSQPFMRWRDRFEFCQEAIEKAEQETGERKGHYLNVTAPNMEEIYRRAEFAKEIGSPIIMSDYLTIGWAAHSSLSRWCRANGMLLHVHRAMHGVIDRNPRHGINFRVLAKLLRLLGGDHLHSGTVVGKLEGDRAATLGWVDLMRERHVKEDRSRGLFFDQPWGHMAPVMPVASGGIHVWHMPALLAIFGDDAVFQFGGGTLGHPWGNAAGAAANRVALEACVRARNEGRDVEREGKDILTAAAQSSPELKVAMETWREIKFEFDVVDKLDAPHR.

Substrate contacts are provided by Asn-115 and Thr-165. Lys-167 functions as the Proton acceptor in the catalytic mechanism. Lys-169 lines the substrate pocket. Residues Lys-193, Asp-195, and Glu-196 each contribute to the Mg(2+) site. The residue at position 193 (Lys-193) is an N6-carboxylysine. His-286 acts as the Proton acceptor in catalysis. Residues Arg-287, His-319, and Ser-371 each contribute to the substrate site.

Belongs to the RuBisCO large chain family. Type I subfamily. As to quaternary structure, heterohexadecamer of 8 large chains and 8 small chains. It depends on Mg(2+) as a cofactor.

The catalysed reaction is 2 (2R)-3-phosphoglycerate + 2 H(+) = D-ribulose 1,5-bisphosphate + CO2 + H2O. It catalyses the reaction D-ribulose 1,5-bisphosphate + O2 = 2-phosphoglycolate + (2R)-3-phosphoglycerate + 2 H(+). Functionally, ruBisCO catalyzes two reactions: the carboxylation of D-ribulose 1,5-bisphosphate, the primary event in carbon dioxide fixation, as well as the oxidative fragmentation of the pentose substrate. Both reactions occur simultaneously and in competition at the same active site. The polypeptide is Ribulose bisphosphate carboxylase large chain 1 (Rhodopseudomonas palustris (strain BisB5)).